Reading from the N-terminus, the 353-residue chain is Tetraacyldisaccharide 4'-kinase (353 aa).

ATP is bound at residue 49-56 (TAGGTGKT).

Belongs to the LpxK family.

It catalyses the reaction a lipid A disaccharide + ATP = a lipid IVA + ADP + H(+). It participates in glycolipid biosynthesis; lipid IV(A) biosynthesis; lipid IV(A) from (3R)-3-hydroxytetradecanoyl-[acyl-carrier-protein] and UDP-N-acetyl-alpha-D-glucosamine: step 6/6. Transfers the gamma-phosphate of ATP to the 4'-position of a tetraacyldisaccharide 1-phosphate intermediate (termed DS-1-P) to form tetraacyldisaccharide 1,4'-bis-phosphate (lipid IVA). The sequence is that of Tetraacyldisaccharide 4'-kinase from Chlorobium phaeovibrioides (strain DSM 265 / 1930) (Prosthecochloris vibrioformis (strain DSM 265)).